The chain runs to 304 residues: Murein tetrapeptide carboxypeptidase (304 aa).

Residue Ser106 is the Nucleophile of the active site. Residues Glu200 and His270 each act as charge relay system in the active site.

Belongs to the peptidase S66 family.

The protein localises to the cytoplasm. It carries out the reaction N-acetyl-D-glucosaminyl-N-acetylmuramoyl-L-alanyl-meso-2,6-diaminoheptanedioyl-D-alanine + H2O = N-acetyl-D-glucosaminyl-N-acetylmuramoyl-L-alanyl-meso-2,6-diaminoheptanedioate + D-alanine. The protein operates within cell wall biogenesis; peptidoglycan recycling. Functionally, releases the terminal D-alanine residue from the cytoplasmic tetrapeptide recycling product L-Ala-gamma-D-Glu-meso-Dap-D-Ala. Can also cleave D-Ala from murein derivatives containing the tetrapeptide, i.e. MurNAc-tetrapeptide, UDP-MurNAc-tetrapeptide, GlcNAc-MurNAc-tetrapeptide, and GlcNAc-anhMurNAc-tetrapeptide. Does not act on murein sacculi or cross-linked muropeptides. The tripeptides produced by the LcdA reaction can then be reused as peptidoglycan building blocks; LcdA is thereby involved in murein recycling. The polypeptide is Murein tetrapeptide carboxypeptidase (ldcA) (Escherichia coli O6:H1 (strain CFT073 / ATCC 700928 / UPEC)).